Consider the following 546-residue polypeptide: T-complex protein 1 subunit epsilon (546 aa).

Belongs to the TCP-1 chaperonin family. In terms of assembly, heterooligomeric complex of about 850 to 900 kDa that forms two stacked rings, 12 to 16 nm in diameter.

The protein resides in the cytoplasm. In terms of biological role, molecular chaperone; assists the folding of proteins upon ATP hydrolysis. Known to play a role, in vitro, in the folding of actin and tubulin. In Schizosaccharomyces pombe (strain 972 / ATCC 24843) (Fission yeast), this protein is T-complex protein 1 subunit epsilon (cct5).